The sequence spans 548 residues: Glutamyl-tRNA(Gln) amidotransferase subunit B, chloroplastic/mitochondrial (548 aa).

Belongs to the GatB/GatE family. GatB subfamily. As to quaternary structure, subunit of the heterotrimeric GatCAB amidotransferase (AdT) complex, composed of A, B and C subunits.

The protein localises to the mitochondrion. Its subcellular location is the plastid. It localises to the chloroplast. The enzyme catalyses L-glutamyl-tRNA(Gln) + L-glutamine + ATP + H2O = L-glutaminyl-tRNA(Gln) + L-glutamate + ADP + phosphate + H(+). In terms of biological role, allows the formation of correctly charged Gln-tRNA(Gln) through the transamidation of misacylated Glu-tRNA(Gln) in chloroplasts and mitochondria. The reaction takes place in the presence of glutamine and ATP through an activated gamma-phospho-Glu-tRNA(Gln). The sequence is that of Glutamyl-tRNA(Gln) amidotransferase subunit B, chloroplastic/mitochondrial from Sorghum bicolor (Sorghum).